The following is a 472-amino-acid chain: Methanethiol oxidase (472 aa).

Residue A2 is modified to N-acetylalanine. Residues S111 and S467 each carry the phosphoserine modification.

Belongs to the selenium-binding protein family. In terms of assembly, interacts with USP33. In terms of processing, the N-terminus is blocked. As to expression, present in liver and colon (at protein level).

The protein localises to the nucleus. It is found in the cytoplasm. It localises to the cytosol. The protein resides in the membrane. It catalyses the reaction methanethiol + O2 + H2O = hydrogen sulfide + formaldehyde + H2O2 + H(+). Its pathway is organosulfur degradation. Functionally, catalyzes the oxidation of methanethiol, an organosulfur compound known to be produced in substantial amounts by gut bacteria. Selenium-binding protein which may be involved in the sensing of reactive xenobiotics in the cytoplasm. May be involved in intra-Golgi protein transport. This Rattus norvegicus (Rat) protein is Methanethiol oxidase (Selenbp1).